A 286-amino-acid polypeptide reads, in one-letter code: tRNA (guanine-N(7)-)-methyltransferase (286 aa).

The disordered stretch occupies residues 1-21 (MTNPESTAIDPVAAMGTDHTE). S-adenosyl-L-methionine contacts are provided by glutamate 91, glutamate 116, asparagine 143, and aspartate 165. The active site involves aspartate 165. Substrate-binding positions include lysine 169, aspartate 201, and 262-265 (TNFE).

This sequence belongs to the class I-like SAM-binding methyltransferase superfamily. TrmB family.

It carries out the reaction guanosine(46) in tRNA + S-adenosyl-L-methionine = N(7)-methylguanosine(46) in tRNA + S-adenosyl-L-homocysteine. Its pathway is tRNA modification; N(7)-methylguanine-tRNA biosynthesis. In terms of biological role, catalyzes the formation of N(7)-methylguanine at position 46 (m7G46) in tRNA. This chain is tRNA (guanine-N(7)-)-methyltransferase, found in Bifidobacterium longum (strain NCC 2705).